A 313-amino-acid polypeptide reads, in one-letter code: Porphobilinogen deaminase (313 aa).

At Cys-242 the chain carries S-(dipyrrolylmethanemethyl)cysteine.

This sequence belongs to the HMBS family. As to quaternary structure, monomer. The cofactor is dipyrromethane.

The catalysed reaction is 4 porphobilinogen + H2O = hydroxymethylbilane + 4 NH4(+). It participates in porphyrin-containing compound metabolism; protoporphyrin-IX biosynthesis; coproporphyrinogen-III from 5-aminolevulinate: step 2/4. Functionally, tetrapolymerization of the monopyrrole PBG into the hydroxymethylbilane pre-uroporphyrinogen in several discrete steps. In Enterobacter sp. (strain 638), this protein is Porphobilinogen deaminase.